The primary structure comprises 1307 residues: Cyclic nucleotide-gated channel beta-1 (1307 aa).

Disordered stretches follow at residues 1-101, 126-178, 193-262, 320-458, 470-625, and 648-681; these read MLGW…AQVA, QPVY…TEPS, LPQP…PGDP, DSCW…LDSC, LERA…SQNS, and EKLI…KPAE. Residues 1–720 are Cytoplasmic-facing; it reads MLGWVQRVLP…SIDPLTNLMY (720 aa). A compositionally biased stretch (acidic residues) spans 43 to 59; it reads VQPEPEPEPEPAPEEAA. The span at 165–174 shows a compositional bias: basic and acidic residues; sequence GSDKTSKTQD. Acidic residues predominate over residues 361 to 386; the sequence is QEEEEEEKEEKEEKEEEEEKEEEEKR. Residues 387–406 show a composition bias toward basic and acidic residues; sequence EEEKKKEKEEEKKEKEKEEK. Acidic residues-rich tracts occupy residues 407–451 and 483–518; these read EEKE…EEEP and LPEE…EEGE. Residues 550-560 are compositionally biased toward pro residues; the sequence is TIPPPERPPVS. Residues 621 to 631 form a calmodulin-binding CaM1 region; sequence ASQNSAIINDR. A helical membrane pass occupies residues 721-742; the sequence is ILWLFFVVLAWNWNCWLIPVRW. Residues 743–751 lie on the Extracellular side of the membrane; it reads AFPYQRADN. A helical transmembrane segment spans residues 752–773; sequence IHLWLLMDYLCDFIYLLDITVF. The Cytoplasmic portion of the chain corresponds to 774 to 788; sequence QMRLQFVKGGDIITD. The helical transmembrane segment at 789–808 threads the bilayer; that stretch reads KKEMRNNYLKSQRFKMDLLC. Residues 809 to 824 are Extracellular-facing; the sequence is LLPLDFLYLKLGVNPL. A helical transmembrane segment spans residues 825 to 837; the sequence is LRLPRCLKYMAFF. Residues 838 to 849 are Cytoplasmic-facing; the sequence is EFNNRLEAILSK. Residues 850-872 traverse the membrane as a helical segment; it reads AYVYRVIRTTAYLLYSLHLNSCL. The tract at residues 850 to 949 is ion conduction pathway; the sequence is AYVYRVIRTT…IGQMRDVVGA (100 aa). The Extracellular portion of the chain corresponds to 873–895; it reads YYWASAFQGIGSTHWVYDGVGNS. Helical transmembrane passes span 896–922 and 923–948; these read YIRC…LFEI and VFQL…DVVG. Residues 949 to 1307 lie on the Cytoplasmic side of the membrane; the sequence is AATAGQTYYR…MLEEKKEEVE (359 aa). Residues 952 to 1028 form a C-linker region; it reads AGQTYYRSCM…NIVSKVALFQ (77 aa). The segment at 1026–1130 is cNMP-binding domain; sequence LFQGCDRQMI…LDKKDLNEIL (105 aa). The segment at 1032-1148 is cyclic nucleotide-binding domain; it reads RQMIFDMLKR…LLRKKARRML (117 aa). 3',5'-cyclic GMP contacts are provided by glycine 1093, glutamate 1094, serine 1096, arginine 1106, and threonine 1107. Arginine 1106 lines the 3',5'-cyclic AMP pocket. The calmodulin-binding CaM2 stretch occupies residues 1212–1218; it reads QQQLLEQ. Low complexity predominate over residues 1214-1238; sequence QLLEQAKSSQEAGGEEGSGATDQPA. Positions 1214–1307 are disordered; it reads QLLEQAKSSQ…MLEEKKEEVE (94 aa). A compositionally biased stretch (pro residues) spans 1250–1261; sequence EPPAPSSPPPAS.

It belongs to the cyclic nucleotide-gated cation channel (TC 1.A.1.5) family. CNGB1 subfamily. In terms of assembly, the rod cyclic nucleotide-gated channel is a heterotetramer composed of CNGA1 and CNGB1 subunits with 3:1 stoichiometry. CNGA1:CNGB1 channel binds Ca(2+)-bound CALM1 via CaM1 and CaM2 regions of the CNGB1 subunit; this interaction modulates the affinity of the channel for cNMPs in response to intracellular Ca(2+) levels. The olfactory cyclic nucleotide-gated channel is a heterotetramer composed of CNGA2, CNGA4 and CNGB1b subunits with 2:1:1 stoichiometry. Expressed in olfactory sensory cilia (at protein level).

It localises to the cell projection. It is found in the cilium membrane. It carries out the reaction Ca(2+)(in) = Ca(2+)(out). It catalyses the reaction Na(+)(in) = Na(+)(out). The enzyme catalyses K(+)(in) = K(+)(out). The catalysed reaction is NH4(+)(in) = NH4(+)(out). It carries out the reaction Rb(+)(in) = Rb(+)(out). It catalyses the reaction Li(+)(in) = Li(+)(out). The enzyme catalyses Cs(+)(in) = Cs(+)(out). Pore-forming subunit of the rod cyclic nucleotide-gated channel. Mediates rod photoresponses at dim light converting transient changes in intracellular cGMP levels into electrical signals. In the dark, cGMP levels are high and keep the channel open enabling a steady inward current carried by Na(+) and Ca(2+) ions that leads to membrane depolarization and neurotransmitter release from synaptic terminals. Upon photon absorption cGMP levels decline leading to channel closure and membrane hyperpolarization that ultimately slows neurotransmitter release and signals the presence of light, the end point of the phototransduction cascade. Conducts cGMP- and cAMP-gated ion currents, with permeability for monovalent and divalent cations. The selectivity for Ca(2+) over Na(+) increases with cGMP concentrations, whereas the selectivity among monovalent ions is independent of the cGMP levels. Its function is as follows. Pore-forming subunit of the olfactory cyclic nucleotide-gated channel. Operates in the cilia of olfactory sensory neurons where chemical stimulation of the odorant is converted to an electrical signal. Mediates odorant-induced cAMP-dependent Ca(2+) influx triggering neuron depolarization. The rise of intracellular Ca(2+) levels potentiates the olfactory response by activating Ca(2+)-dependent Cl(-) channels, but it also serves as a negative feedback signal to desensitize the channel for rapid adaptation to odorants. This chain is Cyclic nucleotide-gated channel beta-1, found in Rattus norvegicus (Rat).